Here is a 31-residue protein sequence, read N- to C-terminus: MHMDIVSLAWAALMVVFTFSLSLVVWGRSGL.

A helical transmembrane segment spans residues 5–25 (IVSLAWAALMVVFTFSLSLVV).

Belongs to the PetN family. In terms of assembly, the 4 large subunits of the cytochrome b6-f complex are cytochrome b6, subunit IV (17 kDa polypeptide, PetD), cytochrome f and the Rieske protein, while the 4 small subunits are PetG, PetL, PetM and PetN. The complex functions as a dimer.

The protein localises to the plastid. It localises to the chloroplast thylakoid membrane. Its function is as follows. Component of the cytochrome b6-f complex, which mediates electron transfer between photosystem II (PSII) and photosystem I (PSI), cyclic electron flow around PSI, and state transitions. The polypeptide is Cytochrome b6-f complex subunit 8 (Acorus calamus (Sweet flag)).